We begin with the raw amino-acid sequence, 354 residues long: NADH-quinone oxidoreductase subunit H (354 aa).

8 consecutive transmembrane segments (helical) span residues 25-45 (LVRILVVAVVILLCVAYLILW), 91-111 (WIYLIAPIMVVVPAFAVWAVI), 126-146 (LLYAMAISSIGVYGVILAGWA), 170-190 (MGFALVVVLMTAGTLNLSGIV), 205-225 (FLSWNWLPLLPMFVVYFISGI), 267-287 (IVISALAATLFLGGWSAPFGF), 290-310 (FVPGIVWLVAKVFLLLSVFIW), and 330-350 (IFIPVCVVWLVVVGFWIMSPL).

Belongs to the complex I subunit 1 family. In terms of assembly, NDH-1 is composed of 14 different subunits. Subunits NuoA, H, J, K, L, M, N constitute the membrane sector of the complex.

Its subcellular location is the cell inner membrane. The enzyme catalyses a quinone + NADH + 5 H(+)(in) = a quinol + NAD(+) + 4 H(+)(out). NDH-1 shuttles electrons from NADH, via FMN and iron-sulfur (Fe-S) centers, to quinones in the respiratory chain. The immediate electron acceptor for the enzyme in this species is believed to be ubiquinone. Couples the redox reaction to proton translocation (for every two electrons transferred, four hydrogen ions are translocated across the cytoplasmic membrane), and thus conserves the redox energy in a proton gradient. This subunit may bind ubiquinone. The protein is NADH-quinone oxidoreductase subunit H of Paraburkholderia phytofirmans (strain DSM 17436 / LMG 22146 / PsJN) (Burkholderia phytofirmans).